The following is a 164-amino-acid chain: Diphosphoinositol polyphosphate phosphohydrolase 3-beta (164 aa).

Residues R9, K17–R19, and S38–R40 each bind substrate. The 128-residue stretch at K17–K144 folds into the Nudix hydrolase domain. Mg(2+) contacts are provided by G49 and E65. A Nudix box motif is present at residues G50–G71. E68 (proton acceptor) is an active-site residue. A Mg(2+)-binding site is contributed by E69. Substrate contacts are provided by residues R89–H91, R115, and K133. The interval K144–P164 is disordered.

The protein belongs to the Nudix hydrolase family. DIPP subfamily. The cofactor is Mg(2+). It depends on Mn(2+) as a cofactor.

It is found in the cytoplasm. The catalysed reaction is diphospho-myo-inositol polyphosphate + H2O = myo-inositol polyphosphate + phosphate.. It catalyses the reaction P(1),P(6)-bis(5'-adenosyl) hexaphosphate + H2O = adenosine 5'-pentaphosphate + AMP + 2 H(+). It carries out the reaction P(1),P(5)-bis(5'-adenosyl) pentaphosphate + H2O = adenosine 5'-tetraphosphate + AMP + 2 H(+). Cleaves a beta-phosphate from the diphosphate groups in PP-InsP5 (diphosphoinositol pentakisphosphate), suggesting that it may play a role in signal transduction. Also able to catalyze the hydrolysis of dinucleoside oligophosphates, with Ap6A and Ap5A being the preferred substrates. The major reaction products are ADP and p4a from Ap6A and ADP and ATP from Ap5A. Also able to hydrolyze 5-phosphoribose 1-diphosphate. The polypeptide is Diphosphoinositol polyphosphate phosphohydrolase 3-beta (Bos taurus (Bovine)).